The sequence spans 202 residues: LexA repressor (202 aa).

Active-site for autocatalytic cleavage activity residues include Ser123 and Lys159.

It belongs to the peptidase S24 family. In terms of assembly, homodimer.

It catalyses the reaction Hydrolysis of Ala-|-Gly bond in repressor LexA.. Functionally, binds the consensus sequence 5'-TGTTC-N(4)-GAACA-3'; some genes have a tandem consensus sequence, at high concentrations their binding is cooperative. Binds to the promoters of a number of genes, including dinB, imuA, lexA, recA, recQ, splB and uvrA. Represses a number of genes involved in the response to DNA damage (SOS response). In the presence of single-stranded DNA, RecA interacts with LexA causing an autocatalytic cleavage which disrupts the DNA-binding part of LexA, leading to derepression of the SOS regulon and eventually DNA repair. This is LexA repressor from Verrucomicrobium spinosum (strain ATCC 43997 / DSM 4136 / JCM 18804 / IFAM 1439).